Here is a 205-residue protein sequence, read N- to C-terminus: Small ribosomal subunit protein uS4 (205 aa).

In terms of domain architecture, S4 RNA-binding spans Arg-110–Leu-172. A disordered region spans residues Met-173 to Glu-205. A compositionally biased stretch (low complexity) spans Ala-174–Glu-205.

This sequence belongs to the universal ribosomal protein uS4 family. As to quaternary structure, part of the 30S ribosomal subunit. Contacts protein S5. The interaction surface between S4 and S5 is involved in control of translational fidelity.

In terms of biological role, one of the primary rRNA binding proteins, it binds directly to 16S rRNA where it nucleates assembly of the body of the 30S subunit. Its function is as follows. With S5 and S12 plays an important role in translational accuracy. The polypeptide is Small ribosomal subunit protein uS4 (Methanocella arvoryzae (strain DSM 22066 / NBRC 105507 / MRE50)).